Here is a 445-residue protein sequence, read N- to C-terminus: Probable protein phosphatase 2C 14 (445 aa).

A PPM-type phosphatase domain is found at 120 to 440; the sequence is GFGVVSRNGK…DDITVVIIDL (321 aa). Mn(2+) is bound by residues aspartate 156, glycine 157, and aspartate 318. Residues 384–404 form a disordered region; it reads NSENESPSLNREIGSSPSKSP. Residues 390-404 are compositionally biased toward polar residues; it reads PSLNREIGSSPSKSP. Aspartate 431 is a Mn(2+) binding site.

Belongs to the PP2C family. It depends on Mg(2+) as a cofactor. Requires Mn(2+) as cofactor.

It catalyses the reaction O-phospho-L-seryl-[protein] + H2O = L-seryl-[protein] + phosphate. The enzyme catalyses O-phospho-L-threonyl-[protein] + H2O = L-threonyl-[protein] + phosphate. In Arabidopsis thaliana (Mouse-ear cress), this protein is Probable protein phosphatase 2C 14.